The chain runs to 565 residues: Ubiquitin carboxyl-terminal hydrolase 21 (565 aa).

Residues methionine 1–glutamate 14 show a composition bias toward basic and acidic residues. Disordered stretches follow at residues methionine 1 to proline 103, alanine 109 to glycine 128, and leucine 142 to phenylalanine 163. Residues alanine 42–glycine 57 are compositionally biased toward pro residues. The span at proline 58–arginine 70 shows a compositional bias: basic and acidic residues. Residues glycine 71–leucine 82 are compositionally biased toward low complexity. Residues glutamate 134–arginine 152 carry the Nuclear export signal motif. The 347-residue stretch at valine 212–methionine 558 folds into the USP domain. Cysteine 221 acts as the Nucleophile in catalysis. Zn(2+)-binding residues include cysteine 384, cysteine 387, cysteine 437, and cysteine 440. Histidine 518 serves as the catalytic Proton acceptor.

The protein belongs to the peptidase C19 family. USP21 subfamily. Interacts with BEND3.

The protein localises to the cytoplasm. It is found in the nucleus. It carries out the reaction Thiol-dependent hydrolysis of ester, thioester, amide, peptide and isopeptide bonds formed by the C-terminal Gly of ubiquitin (a 76-residue protein attached to proteins as an intracellular targeting signal).. In terms of biological role, deubiquitinating enzyme that hydrolyzes 'Lys-6'- and 'Lys-11'-linked polyubiquitin. Also hydrolyzes heterotypic (mixed and branched) and homotypic chains. Important regulator of energy metabolism. Glucose and fatty acids trigger its nuclear translocation by CBP-dependent acetylation. In the nucleus, deubiquitinates and stabilizes the nuclear receptor PPARD regulating the expression of various genes involved in glucose and lipid metabolism and oxidative phosphorylation. Also acts as a negative regulator of the ribosome quality control (RQC) by mediating deubiquitination of 40S ribosomal proteins RPS10/eS10 and RPS20/uS10, thereby antagonizing ZNF598-mediated 40S ubiquitination. This is Ubiquitin carboxyl-terminal hydrolase 21 (USP21) from Bos taurus (Bovine).